The primary structure comprises 621 residues: Membrane protein insertase YidC (621 aa).

6 helical membrane passes run 1 to 21, 363 to 383, 436 to 456, 486 to 506, 527 to 547, and 549 to 569; these read MDKNTLVGFALIGAVVIGFSI, GWGLSMGVVLLLMTIIVKVLV, MGGCLPMLIQMPVFMALFFFV, IPLLGNHLSLFCLLFSITNIL, LMMYIMPVMFIFIFNGYSSGL, and YYYFISGLIGILTMVILRKTT.

Belongs to the OXA1/ALB3/YidC family. Type 1 subfamily. Interacts with the Sec translocase complex via SecD. Specifically interacts with transmembrane segments of nascent integral membrane proteins during membrane integration.

The protein localises to the cell inner membrane. Functionally, required for the insertion and/or proper folding and/or complex formation of integral membrane proteins into the membrane. Involved in integration of membrane proteins that insert both dependently and independently of the Sec translocase complex, as well as at least some lipoproteins. Aids folding of multispanning membrane proteins. The polypeptide is Membrane protein insertase YidC (Phocaeicola vulgatus (strain ATCC 8482 / DSM 1447 / JCM 5826 / CCUG 4940 / NBRC 14291 / NCTC 11154) (Bacteroides vulgatus)).